We begin with the raw amino-acid sequence, 10061 residues long: MATH and LRR domain-containing protein PFE0570w (10061 aa).

Disordered regions lie at residues 166-210, 244-471, and 1004-1170; these read DMDN…EKKN, NNSD…NDIN, and DDQK…DTSF. Polar residues predominate over residues 169 to 179; that stretch reads NNPNNHVSNNG. The segment covering 193–205 has biased composition (low complexity); the sequence is TSNSIHKNNNTNI. A compositionally biased stretch (basic and acidic residues) spans 270–282; sequence KKSDNNNDKKNDD. A compositionally biased stretch (low complexity) spans 285–320; it reads NNNNNNNNNNNNNNNNNDNHVCTSNNQPNTINKQNN. Residues 328–338 show a composition bias toward polar residues; the sequence is DQNGRTKITPQ. Residues 338-366 are a coiled coil; that stretch reads QNVNQKEKEIKNVVKEKNNFNREEKDITN. Positions 342–365 are enriched in basic and acidic residues; the sequence is QKEKEIKNVVKEKNNFNREEKDIT. Residues 366 to 375 are compositionally biased toward acidic residues; the sequence is NSDDYDENST. Polar residues-rich tracts occupy residues 376–389 and 421–437; these read DESC…TSSE and VPSN…SAEN. Residues 431-469 adopt a coiled-coil conformation; it reads NVKSAENCNKEKKKKKKKKKKELNNDNKDNTLNNETMND. Over residues 441–451 the composition is skewed to basic residues; sequence EKKKKKKKKKK. A compositionally biased stretch (low complexity) spans 460 to 471; it reads NTLNNETMNDIN. A compositionally biased stretch (basic and acidic residues) spans 1025 to 1037; sequence NEEKPNVNKEGNI. Low complexity predominate over residues 1047–1057; the sequence is NKNKNNNNNNN. The span at 1058-1132 shows a compositional bias: basic and acidic residues; that stretch reads DKNDKNDKND…KKKKNGKEQN (75 aa). Over residues 1133–1165 the composition is skewed to acidic residues; it reads EDSTESDDESSVIDDNYIDDDSCDCDSESDSID. Residues 1328-1458 form the MATH domain; the sequence is NGKIELYIPN…SGGLLIKGKV (131 aa). The disordered stretch occupies residues 1651–1698; the sequence is GGNLQNEQKGDEDVKKEDVKKENVNKEEIKNGNNNNNNDENENEVDDN. Residues 1658–1680 are compositionally biased toward basic and acidic residues; it reads QKGDEDVKKEDVKKENVNKEEIK. A coiled-coil region spans residues 1916-1948; sequence NYLSNLNKVKININDLNNNIVDVNNSIHNIEKE. Over residues 1973–1995 the composition is skewed to basic and acidic residues; the sequence is HKETSSIQNKGKEKSNNNIKSDD. Disordered regions lie at residues 1973–1998, 2155–2245, 2427–2566, and 3120–3139; these read HKET…DNNN, LNKS…PSYK, YSDD…NNIK, and SNET…NEMK. The span at 2216–2228 shows a compositional bias: acidic residues; sequence NNDDKDDDDDDSY. The span at 2235–2245 shows a compositional bias: basic and acidic residues; the sequence is SDGKKNDPSYK. Residues 2475–2484 are compositionally biased toward low complexity; that stretch reads NNNNNNNNMM. Composition is skewed to basic and acidic residues over residues 2487-2496 and 2505-2527; these read DDNKVNKNEE and QIKE…RNED. Low complexity-rich tracts occupy residues 2552–2564 and 3121–3133; these read NNNN…NNNN and NETN…NRTN. Positions 2555–2580 form a coiled coil; sequence NNNNNNNNNNIKRLDDSYNKLLKNKN. A helical transmembrane segment spans residues 3398-3418; the sequence is KLILKKIFMYLNIICMIIKYI. Disordered regions lie at residues 3802-3826, 3847-3890, and 3919-3953; these read STND…YSKK, LTSG…DNNN, and ESND…EKKS. The span at 3809–3822 shows a compositional bias: basic and acidic residues; the sequence is VDRSDDSESNDDKK. Positions 3851-3890 are enriched in low complexity; that stretch reads NSSSKNSKKNSNNESIQMDNTNNSNSNNNNKNDNNNDNNN. Positions 3926–3941 are enriched in polar residues; it reads KNQNIQSNEQSVTPNR. Residues 3942-3953 show a composition bias toward basic and acidic residues; that stretch reads NIEENKDHEKKS. Residues 3977 to 4001 adopt a coiled-coil conformation; sequence EHLGNATAVLNILQKKLENEELKKL. A compositionally biased stretch (basic and acidic residues) spans 4039–4065; sequence VSAHKEKNVKTDSSDDKKKKEDNENNN. Disordered stretches follow at residues 4039 to 4074, 4155 to 4180, 4352 to 4414, 4919 to 4943, 4991 to 5030, and 5179 to 5207; these read VSAH…IIHN, KGNN…NNMG, SNNN…NNNN, NKRK…DNDN, DGLN…KNEK, and SKIA…KSNL. Residues 4157-4178 show a composition bias toward low complexity; it reads NNSKDNNNNNNNNNNNNNNKNN. The stretch at 4399 to 4424 forms a coiled coil; that stretch reads NNNNNNNNNNNNNNNNVNKEIIKLNS. Low complexity-rich tracts occupy residues 4929–4943, 5004–5019, and 5185–5202; these read NNNN…DNDN, NMNN…NNSN, and NGNN…NNNN. The stretch at 5006–5046 forms a coiled coil; it reads NNVKNKNNNNNNSNNKRKKNEKNEKIDKIEQFLHESELEKD. Coiled-coil stretches lie at residues 5486-5563, 5728-5810, and 5900-6022; these read NNNN…NIYE, DVLK…DKEE, and MNND…INNY. Composition is skewed to basic and acidic residues over residues 5716–5732, 5738–5811, and 5909–5953; these read KDAK…VLKD, SNKE…KEEP, and NKNK…KKDN. 7 disordered regions span residues 5716 to 5816, 5892 to 6009, 6123 to 6142, 6299 to 6338, 6722 to 6760, 7585 to 7730, and 7744 to 7787; these read KDAK…QINE, EIIN…KKLK, KSET…VDGK, NDSI…DKGE, NMNN…NNNI, EDML…VEEK, and DLLS…KKSS. The segment covering 5954-5968 has biased composition (low complexity); sequence NNSNNNNNNNNLSNN. Over residues 5969 to 5978 the composition is skewed to acidic residues; that stretch reads GEEDPNDSDS. Residues 5991–6003 are compositionally biased toward basic and acidic residues; the sequence is NKNINDDSDDNNK. Residues 6129 to 6138 show a composition bias toward polar residues; it reads SNKNVESNDN. 2 stretches are compositionally biased toward low complexity: residues 6314 to 6333 and 6722 to 6759; these read SNSN…NNNN and NMNN…NNNN. A coiled-coil region spans residues 6719-6743; sequence NMNNMNNNNNNNNNNNNNNNNNNNN. The span at 7585 to 7599 shows a compositional bias: basic and acidic residues; it reads EDMLHSKKTDVIQHG. A compositionally biased stretch (acidic residues) spans 7600–7685; sequence DEEEDDEEDD…EHINEEEQED (86 aa). 4 coiled-coil regions span residues 7601 to 7637, 7710 to 7813, 7934 to 7961, and 8217 to 8241; these read EEED…DIED, NTKI…NKNE, KTDE…IDNE, and NINN…GKRE. Positions 7749-7765 are enriched in basic residues; it reads SKKKNHKDKRNASKNKN. Basic and acidic residues predominate over residues 7766 to 7786; the sequence is KNKDILKKNENNINDEKEKKS. 3 disordered regions span residues 8189 to 8252, 8293 to 8380, and 8474 to 8497; these read ETGG…GGEE, GKVS…IIMS, and KKKN…MDEE. Basic and acidic residues predominate over residues 8218-8242; sequence INNKEKETNKNEEQQQGEAEGKREG. Over residues 8243–8252 the composition is skewed to acidic residues; it reads EGEEGEGGEE. The segment covering 8305-8314 has biased composition (basic and acidic residues); that stretch reads LLNDKEHEKD. Over residues 8315–8363 the composition is skewed to acidic residues; the sequence is NEDNDEDNDEDDDDEDDDEDDEDDDDDDDDDDDDDDDDDYDEDYDEDYD. Over residues 8364–8374 the composition is skewed to basic and acidic residues; the sequence is EKLVENKKNER. Residues 8478–8492 are compositionally biased toward low complexity; it reads YSNNNIYNNNSSNKV. Coiled-coil stretches lie at residues 8644–8697, 8882–8907, and 9219–9247; these read SETL…ELNN, QYLE…VDNY, and IDMK…SNNN. 3 disordered regions span residues 9759-9779, 9891-9926, and 9985-10061; these read TIPR…NNNS, SNTS…SSSN, and KNNS…NNIY. 3 stretches are compositionally biased toward low complexity: residues 9764-9779, 9899-9926, and 9986-10022; these read NTTT…NNNS, NSSN…SSSN, and NNSI…NNNT. Over residues 10031–10041 the composition is skewed to polar residues; the sequence is IFQQNQNHSDT. Low complexity predominate over residues 10042 to 10061; that stretch reads NNNNNNNNKNNSNNNNNNIY.

The protein localises to the membrane. The sequence is that of MATH and LRR domain-containing protein PFE0570w from Plasmodium falciparum (isolate 3D7).